Here is a 195-residue protein sequence, read N- to C-terminus: E3 ubiquitin-protein ligase ZNRF1 (195 aa).

Residues 1 to 10 (MGGKQSSASR) are compositionally biased toward polar residues. 2 disordered regions span residues 1-36 (MGGK…HFRA) and 61-84 (PFGL…DSRG). The N-myristoyl glycine moiety is linked to residue G2. A compositionally biased stretch (low complexity) spans 18-29 (VSSDDSAVPPSS). An RING-type; atypical zinc finger spans residues 152-193 (CVICLEELSQGDTIARLPCLCIYHKSCIDSWFEVNRCCPEHP).

The protein resides in the endosome. It is found in the lysosome. It localises to the membrane. It carries out the reaction S-ubiquitinyl-[E2 ubiquitin-conjugating enzyme]-L-cysteine + [acceptor protein]-L-lysine = [E2 ubiquitin-conjugating enzyme]-L-cysteine + N(6)-ubiquitinyl-[acceptor protein]-L-lysine.. It participates in protein modification; protein ubiquitination. E3 ubiquitin-protein ligase that plays a role in neuron cells differentiation. Plays a role in the establishment and maintenance of neuronal transmission and plasticity. The protein is E3 ubiquitin-protein ligase ZNRF1 (znrf1) of Xenopus tropicalis (Western clawed frog).